Here is a 138-residue protein sequence, read N- to C-terminus: Protein FAM136A (138 aa).

N-acetylalanine is present on Ala2. Phosphothreonine occurs at positions 124 and 126.

Belongs to the FAM136 family.

In Rattus norvegicus (Rat), this protein is Protein FAM136A (Fam136a).